The sequence spans 268 residues: Probable ribosomal RNA small subunit methyltransferase A (268 aa).

H23, L25, G50, E71, D95, and N110 together coordinate S-adenosyl-L-methionine.

The protein belongs to the class I-like SAM-binding methyltransferase superfamily. rRNA adenine N(6)-methyltransferase family. RsmA subfamily.

It localises to the cytoplasm. In terms of biological role, specifically dimethylates two adjacent adenosines in the loop of a conserved hairpin near the 3'-end of 16S rRNA in the 30S particle. May play a critical role in biogenesis of 30S subunits. This chain is Probable ribosomal RNA small subunit methyltransferase A, found in Pyrococcus horikoshii (strain ATCC 700860 / DSM 12428 / JCM 9974 / NBRC 100139 / OT-3).